We begin with the raw amino-acid sequence, 649 residues long: MEKQGCEIEALDIDYNIFVRKINVNPFGIFRRKPRPEADQPVKTEEESLKLEDETGNKVKHVLKGVTCRAKPWEILAIVGPSGAGKSSLLEILAARLIPQTGSVYVNKRPVDRANFKKISGYVTQKDTLFPLLTVEETLLFSAKLRLKLPADELRSRVKSLVHELGLEAVATARVGDDSVRGISGGERRRVSIGVEVIHDPKVLILDEPTSGLDSTSALLIIDMLKHMAETRGRTIILTIHQPGFRIVKQFNSVLLLANGSTLKQGSVDQLGVYLRSNGLHPPLHENIVEFAIESIESITKQQRLQESRRAAHVLTPQTTLQEKRSEDSQGESKSGKFTLQQLFQQTRVADVGTMNIATEFTRDFANSRLEETMILTHRFSKNIFRTKELFACRTVQMLGSGIVLGLIFHNLKDDLKGARERVGLFAFILTFLLTSTIEALPIFLQEREILMKETSSGSYRVSSYAVANGLVYLPFLLILAILFSTPVYWLVGLNPSFMAFLHFSLLIWLILYTANSVVVCFSALVPNFIVGNSVISGVMGSFFLFSGYFISNHEIPGYWIFMHYISLFKYPFEGFLINEFSKSNKCLEYGFGKCLVTEEDLLKEERYGEESRWRNVVIMLCFVLLYRFISYVILRCRCSQRSFKTTLA.

The ABC transporter domain occupies valine 42–leucine 284. Glycine 80–serine 87 serves as a coordination point for ATP. A disordered region spans residues serine 308–glycine 336. Positions glutamate 371–phenylalanine 581 constitute an ABC transmembrane type-2 domain. The next 6 membrane-spanning stretches (helical) occupy residues leucine 390–histidine 410, leucine 425–leucine 445, leucine 474–leucine 494, leucine 506–valine 526, phenylalanine 529–tyrosine 549, and valine 617–cysteine 637.

Belongs to the ABC transporter superfamily. ABCG family. Eye pigment precursor importer (TC 3.A.1.204) subfamily.

The protein localises to the membrane. The polypeptide is ABC transporter G family member 5 (ABCG5) (Arabidopsis thaliana (Mouse-ear cress)).